A 102-amino-acid polypeptide reads, in one-letter code: uncharacterized protein (102 aa).

A run of 3 helical transmembrane segments spans residues 1 to 21 (MVPL…LRPV), 42 to 62 (SIID…LILV), and 68 to 88 (SIHA…FSIV).

The protein localises to the membrane. This is an uncharacterized protein from Saccharomyces cerevisiae (strain ATCC 204508 / S288c) (Baker's yeast).